We begin with the raw amino-acid sequence, 611 residues long: Major facilitator superfamily domain-containing protein YCR023C (611 aa).

Residues 1-89 (MARQKLTFKE…GRFSEKHGRK (89 aa)) lie on the Extracellular side of the membrane. The chain crosses the membrane as a helical span at residues 90–110 (ITLTCGLIGTSVSLLILGFSR). Residues 111–152 (NFYQALVARSLMGLLNGNVGVIRTIIGEIATERKHQALAFST) are Cytoplasmic-facing. Residues 153–173 (MPLLFQFGAVVGPMIGGFLVF) traverse the membrane as a helical segment. Over 174 to 199 (RDGTMNEVPLWFPHFAKRIIRSYPYA) the chain is Extracellular. The chain crosses the membrane as a helical span at residues 200–220 (LPNVVVCMFLMFGLTNATLFL). The Cytoplasmic segment spans residues 221–353 (EETHPAFKDR…SIFHHVFHTK (133 aa)). A compositionally biased stretch (basic and acidic residues) spans 261–271 (DDSENIHHRNE). Residues 261–301 (DDSENIHHRNENVNSIRGQDSEEDENSPLVNTTNDDDTESI) form a disordered region. Phosphoserine is present on Ser313. The helical transmembrane segment at 354–372 (VFYPISVNFIMALHLIVYN) threads the bilayer. Over 373-413 (EFLPVFLAYDLAVDPENPKKLASKFPWKISGGIGYEPEQTG) the chain is Extracellular. The chain crosses the membrane as a helical span at residues 414–434 (TLLSTTGIFGCFVVIFIFPIV). Residues 435–442 (DRNFDCLT) are Cytoplasmic-facing. Residues 443-463 (IFRTLVKLYPIMYVMVPYVVF) form a helical membrane-spanning segment. Over 464–542 (LQNERIPSWY…YIMSWSQQND (79 aa)) the chain is Extracellular. The chain crosses the membrane as a helical span at residues 543–563 (VAWVSWWSLSLFCMVALYQSY). The Cytoplasmic segment spans residues 564–611 (KIAPIDDNENELHGQGSEDAYNSQSQSSDLRMAHRSSLSSLSNQRCTT). Ser603 is subject to Phosphoserine.

Belongs to the major facilitator superfamily.

Its subcellular location is the membrane. The catalysed reaction is chloride(in) = chloride(out). Its function is as follows. Outward-rectifying chloride channel involved in chloride homeostasis. In Saccharomyces cerevisiae (strain ATCC 204508 / S288c) (Baker's yeast), this protein is Major facilitator superfamily domain-containing protein YCR023C.